The primary structure comprises 242 residues: Venom nerve growth factor (242 aa).

An N-terminal signal peptide occupies residues 1–18 (MSMMCYTLIIAFLIGIWA). Positions 19–125 (APKSEDNVPL…TLNRNIRAKR (107 aa)) are excised as a propeptide. Residues 47–66 (GLKTSRNTDQRHPAPKKAED) are compositionally biased toward basic and acidic residues. The disordered stretch occupies residues 47–70 (GLKTSRNTDQRHPAPKKAEDQELG). 3 cysteine pairs are disulfide-bonded: cysteine 139-cysteine 203, cysteine 181-cysteine 231, and cysteine 191-cysteine 233. N-linked (GlcNAc...) asparagine glycosylation occurs at asparagine 166.

This sequence belongs to the NGF-beta family. In terms of assembly, homodimer; non-covalently linked. Expressed by the venom gland.

It is found in the secreted. Functionally, nerve growth factor is important for the development and maintenance of the sympathetic and sensory nervous systems. It stimulates division and differentiation of sympathetic and embryonic sensory neurons as well as basal forebrain cholinergic neurons in the brain. Its relevance in the snake venom is not clear. However, it has been shown to inhibit metalloproteinase-dependent proteolysis of platelet glycoprotein Ib alpha, suggesting a metalloproteinase inhibition to prevent metalloprotease autodigestion and/or protection against prey proteases. Binds a lipid between the two protein chains in the homodimer. The lipid-bound form promotes histamine relase from mouse mast cells, contrary to the lipid-free form. This chain is Venom nerve growth factor, found in Drysdalia coronoides (White-lipped snake).